We begin with the raw amino-acid sequence, 343 residues long: Autoinducer 2 import system permease protein LsrC (343 aa).

A run of 9 helical transmembrane segments spans residues 13–33 (FLAILALFGVLVALNPAYLSF), 38–58 (MIFASSQILILLALGAALVML), 61–81 (NIDVSVGSTVGLCAIAVGVAL), 92–112 (LFALAIGALAGAFNGLLVVGL), 114–134 (IPAIVATLGTLGLYRGAMLLW), 154–174 (VALGVSPLGMAVLFLVLIGAW), 212–232 (INGMLAACAGIVFASQIGFVP), 251–271 (GISLLGGTGTLIGAFLGAFFL), and 283–303 (LPAWWNDFIAGLVLLGVLVLD). The segment at 321–343 (RFQPGNKGGKHVTPFPKRKKEVA) is disordered.

Belongs to the binding-protein-dependent transport system permease family. AraH/RbsC subfamily. In terms of assembly, the complex is composed of two ATP-binding proteins (LsrA), two transmembrane proteins (LsrC and LsrD) and a solute-binding protein (LsrB).

Its subcellular location is the cell inner membrane. Part of the ABC transporter complex LsrABCD involved in autoinducer 2 (AI-2) import. Probably responsible for the translocation of the substrate across the membrane. The polypeptide is Autoinducer 2 import system permease protein LsrC (lsrC) (Enterobacter sp. (strain 638)).